Consider the following 147-residue polypeptide: Ribosome-binding factor A (147 aa).

Residues 122 to 147 (QQQFGSVDDDVIENDIEESDDTEGKV) form a disordered region. Over residues 128–147 (VDDDVIENDIEESDDTEGKV) the composition is skewed to acidic residues.

The protein belongs to the RbfA family. In terms of assembly, monomer. Binds 30S ribosomal subunits, but not 50S ribosomal subunits or 70S ribosomes.

It is found in the cytoplasm. Functionally, one of several proteins that assist in the late maturation steps of the functional core of the 30S ribosomal subunit. Associates with free 30S ribosomal subunits (but not with 30S subunits that are part of 70S ribosomes or polysomes). Required for efficient processing of 16S rRNA. May interact with the 5'-terminal helix region of 16S rRNA. This is Ribosome-binding factor A from Shewanella oneidensis (strain ATCC 700550 / JCM 31522 / CIP 106686 / LMG 19005 / NCIMB 14063 / MR-1).